The chain runs to 515 residues: MGHNGSWISPNASEPHNASGAEAAGVNRSALGEFGEAQLYRQFTTTVQVVIFIGSLLGNFMVLWSTCRTTVFKSVTNRFIKNLACSGICASLVCVPFDIILSTSPHCCWWIYTMLFCKVVKFLHKVFCSVTILSFPAIALDRYYSVLYPLERKISDAKSRELVMYIWAHAVVASVPVFAVTNVADIYATSTCTEVWSNSLGHLVYVLVYNITTVIVPVVVVFLFLILIRRALSASQKKKVIIAALRTPQNTISIPYASQREAELHATLLSMVMVFILCSVPYATLVVYQTVLNVPDTSVFLLLTAVWLPKVSLLANPVLFLTVNKSVRKCLIGTLVQLHHRYSRRNVVSTGSGMAEASLEPSIRSGSQLLEMFHIGQQQIFKPTEDEEESEAKYIGSADFQAKEIFSTCLEGEQGPQFAPSAPPLSTVDSVSQVAPAAPVEPETFPDKYSLQFGFGPFELPPQWLSETRNSKKRLLPPLGNTPEELIQTKVPKVGRVERKMSRNNKVSIFPKVDS.

Residues 1–16 (MGHNGSWISPNASEPH) show a composition bias toward polar residues. The tract at residues 1–20 (MGHNGSWISPNASEPHNASG) is disordered. The Extracellular portion of the chain corresponds to 1-42 (MGHNGSWISPNASEPHNASGAEAAGVNRSALGEFGEAQLYRQ). N-linked (GlcNAc...) asparagine glycans are attached at residues Asn-4, Asn-11, Asn-17, and Asn-27. Residues 43–63 (FTTTVQVVIFIGSLLGNFMVL) traverse the membrane as a helical segment. Topologically, residues 64–82 (WSTCRTTVFKSVTNRFIKN) are cytoplasmic. Residues 83-103 (LACSGICASLVCVPFDIILST) traverse the membrane as a helical segment. Over 104–118 (SPHCCWWIYTMLFCK) the chain is Extracellular. The chain crosses the membrane as a helical span at residues 119-139 (VVKFLHKVFCSVTILSFPAIA). Topologically, residues 140–160 (LDRYYSVLYPLERKISDAKSR) are cytoplasmic. The helical transmembrane segment at 161–181 (ELVMYIWAHAVVASVPVFAVT) threads the bilayer. Residues 182–207 (NVADIYATSTCTEVWSNSLGHLVYVL) are Extracellular-facing. The chain crosses the membrane as a helical span at residues 208–228 (VYNITTVIVPVVVVFLFLILI). The Cytoplasmic segment spans residues 229-267 (RRALSASQKKKVIIAALRTPQNTISIPYASQREAELHAT). A helical membrane pass occupies residues 268–288 (LLSMVMVFILCSVPYATLVVY). At 289-299 (QTVLNVPDTSV) the chain is on the extracellular side. The helical transmembrane segment at 300–320 (FLLLTAVWLPKVSLLANPVLF) threads the bilayer. Residues 321-515 (LTVNKSVRKC…KVSIFPKVDS (195 aa)) lie on the Cytoplasmic side of the membrane.

It belongs to the G-protein coupled receptor 1 family.

It is found in the cell membrane. In terms of biological role, orphan receptor involved in normal circadian rhythm behavior. Acts through the G-protein subclass G(z)-alpha and has an agonist-independent basal activity to repress cAMP production. This Homo sapiens (Human) protein is G-protein coupled receptor 176 (GPR176).